The primary structure comprises 621 residues: MNNTLNQHYEEKVRPCIDLIDSLRSLGVEKDLALPAIAVIGDQSSGKSSVLEALSGVALPRGSGIVTRCPLELKMKRKKEGEEWHGKISYQDHEEEIEDPSDVEKKIREAQDEMAGVGVGISDDLISLEIGSPDVPDLTLIDLPGIARVAVKGQPENIGEQIKRLIRKFIMKQETISLVVVPCNVDIATTEALKMAQEVDPEGERTLGILTKPDLVDKGTEETVVDIVHNEVIHLTKGYMIVKCRGQKEIMERVSLTEATEREKAFFKEHAHLSTLYDEGHATIPKLAEKLTLELVHHIEKSLPRLEEQIEAKLSETHAELERYGTGPPEDSAERLYFLIDKVTAFTQDAINLSTGEEMKSGVRLNVFSTLRKEFGKWKLHLERSGEIFNQRIEGEVDDYEKTYRGRELPGFINYKTFEVMVKDQIKQLEGPAVKKLKEISDAVRKVFLLLAQSSFTGFPNLLKSAKTKIEAIKQVNESTAESMLRTQFKMELIVYTQDSTYSHSLCERKREEDEDQPLTEIRSTIFSTDNHATLQEMMLHLKSYYWISSQRLADQIPMVIRYLVLQEFASQLQREMLQTLQEKDNIEQLLKEDIDIGSKRAALQSKLKRLMKARSYLVEF.

Residues 31-304 form the Dynamin-type G domain; it reads DLALPAIAVI…LVHHIEKSLP (274 aa). A G1 motif region spans residues 41–48; sequence GDQSSGKS. 41 to 48 contributes to the GTP binding site; that stretch reads GDQSSGKS. Residues 66 to 68 form a G2 motif region; sequence VTR. Residues 142-145 form a G3 motif region; the sequence is DLPG. GTP-binding positions include 142–146 and 211–214; these read DLPGI and TKPD. The G4 motif stretch occupies residues 211 to 214; the sequence is TKPD. The tract at residues 243 to 246 is G5 motif; that stretch reads KCRG. Residues 535–621 form the GED domain; that stretch reads LQEMMLHLKS…MKARSYLVEF (87 aa).

The protein belongs to the TRAFAC class dynamin-like GTPase superfamily. Dynamin/Fzo/YdjA family.

The protein resides in the cytoplasm. Functionally, does not inhibit strain RB-1 of the fish pathogen, infectious hematopoietic necrosis virus (IHNV). This Oncorhynchus mykiss (Rainbow trout) protein is Interferon-induced GTP-binding protein Mx1 (mx1).